Consider the following 326-residue polypeptide: Putative ribose-phosphate pyrophosphokinase 2 (326 aa).

ATP contacts are provided by residues 43–45 and 102–103; these read DGE and RQ. Histidine 136 is a binding site for Mg(2+). Residues aspartate 225 and 229–233 each bind D-ribose 5-phosphate; that span reads NTGKT.

As to quaternary structure, homohexamer. The cofactor is Mg(2+).

Its subcellular location is the cytoplasm. The enzyme catalyses D-ribose 5-phosphate + ATP = 5-phospho-alpha-D-ribose 1-diphosphate + AMP + H(+). It functions in the pathway metabolic intermediate biosynthesis; 5-phospho-alpha-D-ribose 1-diphosphate biosynthesis; 5-phospho-alpha-D-ribose 1-diphosphate from D-ribose 5-phosphate (route I): step 1/1. In terms of biological role, involved in the biosynthesis of the central metabolite phospho-alpha-D-ribosyl-1-pyrophosphate (PRPP) via the transfer of pyrophosphoryl group from ATP to 1-hydroxyl of ribose-5-phosphate (Rib-5-P). The protein is Putative ribose-phosphate pyrophosphokinase 2 of Streptococcus pyogenes serotype M6 (strain ATCC BAA-946 / MGAS10394).